Reading from the N-terminus, the 83-residue chain is Mu-theraphotoxin-Hhn2j 2 (83 aa).

An N-terminal signal peptide occupies residues 1–21; sequence MKASMFLALAGLVLLFVVGYA. Positions 22–48 are excised as a propeptide; that stretch reads SESEEKEFPIELLSKIFAVDVFKGEDR. Disulfide bonds link C50–C65, C57–C70, and C64–C77. L81 is modified (leucine amide).

This sequence belongs to the neurotoxin 10 (Hwtx-1) family. 15 (Hntx-3) subfamily. In terms of assembly, monomer. In terms of tissue distribution, expressed by the venom gland.

Its subcellular location is the secreted. Its function is as follows. Lethal neurotoxin. Selectively blocks tetrodotoxin-sensitive voltage-gated sodium channels (Nav). Does not affect tetrodotoxin-resistant voltage-gated sodium channels or calcium channels. This Cyriopagopus hainanus (Chinese bird spider) protein is Mu-theraphotoxin-Hhn2j 2.